The sequence spans 568 residues: Glucose-6-phosphate isomerase, cytosolic (568 aa).

Glu360 acts as the Proton donor in catalysis. Catalysis depends on residues His391 and Lys516.

Belongs to the GPI family. In terms of assembly, homodimer.

The protein resides in the cytoplasm. The enzyme catalyses alpha-D-glucose 6-phosphate = beta-D-fructose 6-phosphate. The protein operates within carbohydrate degradation; glycolysis; D-glyceraldehyde 3-phosphate and glycerone phosphate from D-glucose: step 2/4. The sequence is that of Glucose-6-phosphate isomerase, cytosolic (PGIC) from Oenothera sinuata var. hirsuta (Mexican evening primrose).